The chain runs to 258 residues: DNA repair protein RecO (258 aa).

The protein belongs to the RecO family.

Its function is as follows. Involved in DNA repair and RecF pathway recombination. The protein is DNA repair protein RecO of Desulfatibacillum aliphaticivorans.